The primary structure comprises 332 residues: Ribosomal RNA small subunit methyltransferase C (332 aa).

It belongs to the methyltransferase superfamily. RsmC family. Monomer.

The protein resides in the cytoplasm. The catalysed reaction is guanosine(1207) in 16S rRNA + S-adenosyl-L-methionine = N(2)-methylguanosine(1207) in 16S rRNA + S-adenosyl-L-homocysteine + H(+). In terms of biological role, specifically methylates the guanine in position 1207 of 16S rRNA in the 30S particle. The polypeptide is Ribosomal RNA small subunit methyltransferase C (Pseudomonas paraeruginosa (strain DSM 24068 / PA7) (Pseudomonas aeruginosa (strain PA7))).